A 125-amino-acid chain; its full sequence is Fumarate reductase subunit D (125 aa).

3 consecutive transmembrane segments (helical) span residues 30-50 (FAMI…MGVI), 60-80 (VVSF…LALP), and 105-125 (IACY…IFML).

Belongs to the FrdD family. Part of an enzyme complex containing four subunits: a flavoprotein (FrdA), an iron-sulfur protein (FrdB), and two hydrophobic anchor proteins (FrdC and FrdD).

The protein localises to the cell inner membrane. Functionally, anchors the catalytic components of the fumarate reductase complex to the cell membrane, binds quinones. The chain is Fumarate reductase subunit D from Vibrio vulnificus (strain YJ016).